We begin with the raw amino-acid sequence, 182 residues long: Ribosome-recycling factor (182 aa).

It belongs to the RRF family.

Its subcellular location is the cytoplasm. Functionally, responsible for the release of ribosomes from messenger RNA at the termination of protein biosynthesis. May increase the efficiency of translation by recycling ribosomes from one round of translation to another. The protein is Ribosome-recycling factor of Picosynechococcus sp. (strain ATCC 27264 / PCC 7002 / PR-6) (Agmenellum quadruplicatum).